Reading from the N-terminus, the 197-residue chain is Glycerol-3-phosphate acyltransferase (197 aa).

5 helical membrane-spanning segments follow: residues 5–25 (IYIAALLLGYLFGSIPFGLIL), 54–74 (GLAAATLLLDALKGTAAVIIA), 80–100 (AEAAMLAALGAFLGHLFPVWL), 112–132 (IGVLIGLFWPGAIVFCLLWLA), and 153–173 (IFLWWFGHPALASLFAVLTLL).

This sequence belongs to the PlsY family. Probably interacts with PlsX.

It is found in the cell inner membrane. The enzyme catalyses an acyl phosphate + sn-glycerol 3-phosphate = a 1-acyl-sn-glycero-3-phosphate + phosphate. The protein operates within lipid metabolism; phospholipid metabolism. In terms of biological role, catalyzes the transfer of an acyl group from acyl-phosphate (acyl-PO(4)) to glycerol-3-phosphate (G3P) to form lysophosphatidic acid (LPA). This enzyme utilizes acyl-phosphate as fatty acyl donor, but not acyl-CoA or acyl-ACP. This Rhodopseudomonas palustris (strain HaA2) protein is Glycerol-3-phosphate acyltransferase.